Reading from the N-terminus, the 117-residue chain is NADH dehydrogenase [ubiquinone] 1 beta subcomplex subunit 9 (117 aa).

The residue at position 2 (Ser-2) is an N-acetylserine.

The protein belongs to the complex I LYR family. Complex I is composed of at least 49 different subunits. Expressed in roots, stems, flowers, rosette leaves, cauline leaves and siliques, with the highest expression in the stems.

Its subcellular location is the mitochondrion inner membrane. In terms of biological role, accessory subunit of the mitochondrial membrane respiratory chain NADH dehydrogenase (Complex I), that is believed to be not involved in catalysis. Complex I functions in the transfer of electrons from NADH to the respiratory chain. The immediate electron acceptor for the enzyme is believed to be ubiquinone. Is required for correct plant growth and development. The polypeptide is NADH dehydrogenase [ubiquinone] 1 beta subcomplex subunit 9 (CIB22) (Arabidopsis thaliana (Mouse-ear cress)).